We begin with the raw amino-acid sequence, 472 residues long: Gamma-glutamylputrescine synthetase PuuA (472 aa).

The 95-residue stretch at 35 to 129 (PNTQYVDVLL…MLLTMVDEDG (95 aa)) folds into the GS beta-grasp domain. Residues 136 to 472 (PRNVLNRLWQ…TEIEWMLKNA (337 aa)) enclose the GS catalytic domain.

This sequence belongs to the glutamine synthetase family. As to quaternary structure, dodecamer. Mg(2+) serves as cofactor. Requires Mn(2+) as cofactor.

The catalysed reaction is putrescine + L-glutamate + ATP = gamma-L-glutamylputrescine + ADP + phosphate + H(+). Its pathway is amine and polyamine degradation; putrescine degradation; 4-aminobutanoate from putrescine: step 1/4. Functionally, involved in the breakdown of putrescine. Catalyzes the ATP-dependent gamma-glutamylation of putrescine, producing gamma-L-glutamylputrescine. Absolutely essential to utilize putrescine as both nitrogen and carbon sources and to decrease the toxicity of putrescine, which can lead to inhibition of cell growth and protein synthesis. In vitro is also able to use several diamines, and spermidine and spermine, instead of putrescine, but with a much lower activity, and cannot catalyze the gamma-glutamylation of ornithine or GABA. The sequence is that of Gamma-glutamylputrescine synthetase PuuA from Escherichia coli (strain K12).